We begin with the raw amino-acid sequence, 74 residues long: Kappa-scoloptoxin(07)-Ssm2c (74 aa).

Positions 1–19 (MLVFYAPLFVSIFSNTVMG) are cleaved as a signal peptide. Positions 20–41 (ATIDKPIPKPILREAIEKIAVN) are excised as a propeptide.

The protein belongs to the scoloptoxin-07 family. Contains 3 disulfide bonds. As to expression, expressed by the venom gland.

The protein localises to the secreted. Its function is as follows. Inhibits voltage-gated potassium channels. This Scolopendra mutilans (Chinese red-headed centipede) protein is Kappa-scoloptoxin(07)-Ssm2c.